A 333-amino-acid chain; its full sequence is MLISFCIPTYNRKEYLEELLNSINNQEKFNLDIEICISDNASTDGTEEMIDVWRNNYNFPIIYRRNSVNLGPDRNFLASVSLANGDYCWIFGSDDALAKDSLAILQTYLDSQADIYLCDRKETGCDLVEIRNPHRSWLRTDDELYVFNNNLDREIYLSRCLSIGGVFSYLSSLIVKKERWDAIDFDASYIGTSYPHVFIMMSVFNTPGCLLHYISKPLVICRGDNDSFEKKGKARRILIDFIAYLKLANDFYSKNISLKRAFENVLLKERPWLYTTLAMACYGNSDEKRDLSEFYAKLGCNKNMINTVLRFGKLAYAVKNITVLKNFTKRIIK.

It belongs to the glycosyltransferase 2 family.

It carries out the reaction CDP-alpha-D-abequose + alpha-D-Man-(1-&gt;4)-alpha-L-Rha-(1-&gt;3)-alpha-D-Gal-di-trans,octa-cis-undecaprenyl diphosphate = alpha-D-Abe-(1-&gt;3)-alpha-D-Man-(1-&gt;4)-alpha-L-Rha-(1-&gt;3)-alpha-D-Gal-di-trans,octa-cis-undecaprenyl diphosphate + CDP + H(+). It functions in the pathway bacterial outer membrane biogenesis; LPS O-antigen biosynthesis. Its function is as follows. Catalyzes the transfer of CDP-abequose on D-mannosyl-L-rhamnosyl-D-galactose-1-diphospholipid to yield D-abequosyl-D-mannosyl-rhamnosyl-D-galactose-1-diphospholipid. The chain is Abequosyltransferase RfbV (rfbV) from Salmonella typhimurium (strain LT2 / SGSC1412 / ATCC 700720).